A 1624-amino-acid chain; its full sequence is ATP-binding cassette sub-family A member 9 (1624 aa).

Residues Leu31–Leu51 form a helical membrane-spanning segment. Asn120 and Asn195 each carry an N-linked (GlcNAc...) asparagine glycan. 6 consecutive transmembrane segments (helical) span residues Val221–Val243, Ser269–Val289, Phe300–Leu320, Phe329–Ala349, Leu354–Met374, and Leu398–Leu418. Residues Ile481–His716 form the ABC transporter 1 domain. Gly517 to Thr524 lines the ATP pocket. Residues Leu864–Phe884 traverse the membrane as a helical segment. The N-linked (GlcNAc...) asparagine glycan is linked to Asn949. 6 helical membrane passes run Thr1026–Gly1046, Ala1065–Met1085, Ile1108–Ile1128, Ser1136–Leu1156, Gly1163–Phe1183, and Glu1200–Leu1220. Residues Leu1288–Lys1521 enclose the ABC transporter 2 domain. Position 1326–1333 (Gly1326–Ser1333) interacts with ATP.

The protein belongs to the ABC transporter superfamily. ABCA family. In terms of tissue distribution, widely expressed with higher expression in heart.

It is found in the membrane. Its function is as follows. Transporter that may play a role in monocyte differentiation and lipid transport and homeostasis. This chain is ATP-binding cassette sub-family A member 9 (ABCA9), found in Homo sapiens (Human).